The primary structure comprises 279 residues: NADPH-dependent 7-cyano-7-deazaguanine reductase (279 aa).

Position 86–88 (86–88 (VES)) interacts with substrate. 88 to 89 (SK) lines the NADPH pocket. Cys-187 serves as the catalytic Thioimide intermediate. Asp-194 functions as the Proton donor in the catalytic mechanism. 226-227 (HE) serves as a coordination point for substrate. 255-256 (RG) is a binding site for NADPH.

It belongs to the GTP cyclohydrolase I family. QueF type 2 subfamily. Homodimer.

Its subcellular location is the cytoplasm. It catalyses the reaction 7-aminomethyl-7-carbaguanine + 2 NADP(+) = 7-cyano-7-deazaguanine + 2 NADPH + 3 H(+). It functions in the pathway tRNA modification; tRNA-queuosine biosynthesis. Functionally, catalyzes the NADPH-dependent reduction of 7-cyano-7-deazaguanine (preQ0) to 7-aminomethyl-7-deazaguanine (preQ1). The sequence is that of NADPH-dependent 7-cyano-7-deazaguanine reductase from Actinobacillus succinogenes (strain ATCC 55618 / DSM 22257 / CCUG 43843 / 130Z).